The sequence spans 371 residues: Bifunctional enzyme IspD/IspF (371 aa).

A 2-C-methyl-D-erythritol 4-phosphate cytidylyltransferase region spans residues 1–210; sequence MLDISLIMLS…LNLPKPSWDI (210 aa). Residues 211–371 are 2-C-methyl-D-erythritol 2,4-cyclodiphosphate synthase; it reads FNGNGFDVHE…NLKYFDWMKL (161 aa). Positions 217 and 219 each coordinate a divalent metal cation. Residues 217–219 and 243–244 each bind 4-CDP-2-C-methyl-D-erythritol 2-phosphate; these read DVH and HS. Histidine 251 contributes to the a divalent metal cation binding site. 4-CDP-2-C-methyl-D-erythritol 2-phosphate is bound by residues 265–267, 270–274, 341–344, phenylalanine 348, and arginine 351; these read DIG, FPDND, and TTTE.

In the N-terminal section; belongs to the IspD/TarI cytidylyltransferase family. IspD subfamily. The protein in the C-terminal section; belongs to the IspF family. It depends on a divalent metal cation as a cofactor.

The catalysed reaction is 2-C-methyl-D-erythritol 4-phosphate + CTP + H(+) = 4-CDP-2-C-methyl-D-erythritol + diphosphate. The enzyme catalyses 4-CDP-2-C-methyl-D-erythritol 2-phosphate = 2-C-methyl-D-erythritol 2,4-cyclic diphosphate + CMP. It functions in the pathway isoprenoid biosynthesis; isopentenyl diphosphate biosynthesis via DXP pathway; isopentenyl diphosphate from 1-deoxy-D-xylulose 5-phosphate: step 2/6. Its pathway is isoprenoid biosynthesis; isopentenyl diphosphate biosynthesis via DXP pathway; isopentenyl diphosphate from 1-deoxy-D-xylulose 5-phosphate: step 4/6. In terms of biological role, bifunctional enzyme that catalyzes the formation of 4-diphosphocytidyl-2-C-methyl-D-erythritol from CTP and 2-C-methyl-D-erythritol 4-phosphate (MEP) (IspD), and catalyzes the conversion of 4-diphosphocytidyl-2-C-methyl-D-erythritol 2-phosphate (CDP-ME2P) to 2-C-methyl-D-erythritol 2,4-cyclodiphosphate (ME-CPP) with a corresponding release of cytidine 5-monophosphate (CMP) (IspF). The sequence is that of Bifunctional enzyme IspD/IspF from Campylobacter lari (strain RM2100 / D67 / ATCC BAA-1060).